Reading from the N-terminus, the 189-residue chain is Inosine triphosphate pyrophosphatase (189 aa).

8–13 (TGNANK) contributes to the ITP binding site. Glutamate 39 provides a ligand contact to Mg(2+). Residues lysine 51, 67–68 (DT), lysine 84, 143–146 (FGWD), lysine 167, and 172–173 (HR) each bind ITP.

This sequence belongs to the HAM1 NTPase family. In terms of assembly, homodimer. Requires Mg(2+) as cofactor. It depends on Mn(2+) as a cofactor.

Its subcellular location is the cytoplasm. The protein resides in the nucleus. The catalysed reaction is ITP + H2O = IMP + diphosphate + H(+). The enzyme catalyses dITP + H2O = dIMP + diphosphate + H(+). It catalyses the reaction XTP + H2O = XMP + diphosphate + H(+). Its function is as follows. Pyrophosphatase that hydrolyzes non-canonical purine nucleotides such as inosine triphosphate (ITP), deoxyinosine triphosphate (dITP) or xanthosine 5'-triphosphate (XTP) to their respective monophosphate derivatives. The enzyme does not distinguish between the deoxy- and ribose forms. Probably excludes non-canonical purines from RNA and DNA precursor pools, thus preventing their incorporation into RNA and DNA and avoiding chromosomal lesions. In Cryptococcus neoformans var. neoformans serotype D (strain JEC21 / ATCC MYA-565) (Filobasidiella neoformans), this protein is Inosine triphosphate pyrophosphatase.